Reading from the N-terminus, the 475-residue chain is Dihydrolipoyl dehydrogenase (475 aa).

FAD is bound by residues 37–46, lysine 55, and alanine 118; that span reads EQYYSLGGVC. Cysteine 46 and cysteine 51 are joined by a disulfide. NAD(+) contacts are provided by residues 183-187, aspartate 206, valine 239, and 272-275; these read GGGII and AIGR. Positions 315 and 323 each coordinate FAD. Histidine 447 acts as the Proton acceptor in catalysis.

This sequence belongs to the class-I pyridine nucleotide-disulfide oxidoreductase family. In terms of assembly, homodimer. Requires FAD as cofactor.

It is found in the cytoplasm. It catalyses the reaction N(6)-[(R)-dihydrolipoyl]-L-lysyl-[protein] + NAD(+) = N(6)-[(R)-lipoyl]-L-lysyl-[protein] + NADH + H(+). Lipoamide dehydrogenase is a component of the alpha-ketoacid dehydrogenase complexes. This Buchnera aphidicola subsp. Baizongia pistaciae (strain Bp) protein is Dihydrolipoyl dehydrogenase (lpdA).